The sequence spans 186 residues: Ribosome-recycling factor (186 aa).

Belongs to the RRF family.

The protein localises to the cytoplasm. Its function is as follows. Responsible for the release of ribosomes from messenger RNA at the termination of protein biosynthesis. May increase the efficiency of translation by recycling ribosomes from one round of translation to another. The chain is Ribosome-recycling factor from Methylocella silvestris (strain DSM 15510 / CIP 108128 / LMG 27833 / NCIMB 13906 / BL2).